Here is a 402-residue protein sequence, read N- to C-terminus: Speedy protein E21 (402 aa).

Positions 1 to 90 (MDRTETRFRK…EPEKELAPEP (90 aa)) are disordered. Polar residues predominate over residues 16-39 (GKITTSRQLHPQNEQSPQRSTSGY). A compositionally biased stretch (acidic residues) spans 76–90 (DESEEEPEKELAPEP).

This sequence belongs to the Speedy/Ringo family.

The polypeptide is Speedy protein E21 (Homo sapiens (Human)).